Reading from the N-terminus, the 1434-residue chain is DNA-directed RNA polymerase subunit beta' (1434 aa).

4 residues coordinate Zn(2+): Cys-70, Cys-72, Cys-85, and Cys-88. The Mg(2+) site is built by Asp-460, Asp-462, and Asp-464. Residues Cys-840, Cys-914, Cys-921, and Cys-924 each coordinate Zn(2+).

Belongs to the RNA polymerase beta' chain family. As to quaternary structure, the RNAP catalytic core consists of 2 alpha, 1 beta, 1 beta' and 1 omega subunit. When a sigma factor is associated with the core the holoenzyme is formed, which can initiate transcription. Mg(2+) serves as cofactor. Zn(2+) is required as a cofactor.

The enzyme catalyses RNA(n) + a ribonucleoside 5'-triphosphate = RNA(n+1) + diphosphate. Its function is as follows. DNA-dependent RNA polymerase catalyzes the transcription of DNA into RNA using the four ribonucleoside triphosphates as substrates. In Tolumonas auensis (strain DSM 9187 / NBRC 110442 / TA 4), this protein is DNA-directed RNA polymerase subunit beta'.